The primary structure comprises 186 residues: Single-stranded DNA-binding protein 1 (186 aa).

The SSB domain occupies M1–L108. Residues Q120–F186 are disordered. Over residues D132 to S141 the composition is skewed to polar residues. Residues S175–F186 are compositionally biased toward acidic residues.

As to quaternary structure, homotetramer.

The polypeptide is Single-stranded DNA-binding protein 1 (ssb1) (Tropheryma whipplei (strain TW08/27) (Whipple's bacillus)).